The following is a 556-amino-acid chain: Arginine--tRNA ligase (556 aa).

A 'HIGH' region motif is present at residues 132–142 (ANPTGPIHLGG).

Belongs to the class-I aminoacyl-tRNA synthetase family. As to quaternary structure, monomer.

Its subcellular location is the cytoplasm. It carries out the reaction tRNA(Arg) + L-arginine + ATP = L-arginyl-tRNA(Arg) + AMP + diphosphate. In Kocuria rhizophila (strain ATCC 9341 / DSM 348 / NBRC 103217 / DC2201), this protein is Arginine--tRNA ligase.